The primary structure comprises 1336 residues: Immunoglobulin superfamily member 1 (1336 aa).

The N-terminal stretch at 1-28 (MTLDRPGEGATMLKTFTVLLFCIRMSLG) is a signal peptide. Residues 29–518 (MTSIVMDPQP…GYLTWNYVLN (490 aa)) lie on the Extracellular side of the membrane. Ig-like C2-type domains follow at residues 38 to 122 (PELW…KVLE), 137 to 222 (QAET…LVVA), 226 to 312 (PKPT…SDVL), 321 to 408 (PKTW…PSHN), and 419 to 500 (PKPS…HRSE). An N-linked (GlcNAc...) asparagine glycan is attached at Asn53. A disulfide bridge connects residues Cys58 and Cys106. A disulfide bridge connects residues Cys248 and Cys296. Residues Asn338, Asn374, and Asn381 are each glycosylated (N-linked (GlcNAc...) asparagine). 2 disulfides stabilise this stretch: Cys343–Cys392 and Cys441–Cys484. A helical transmembrane segment spans residues 519–539 (EAIRLSLIMQLVALLLVVLWI). Residues 540–559 (RWKCRRLRIREAWLLGTAQG) lie on the Cytoplasmic side of the membrane. Residues 560-580 (VTMLFIVTALLCCGLCNGVLI) traverse the membrane as a helical segment. At 581 to 1336 (EETEIVMPTP…RISVELPVPI (756 aa)) the chain is on the extracellular side. Ig-like C2-type domains lie at 589-677 (TPKP…ALEL), 686-760 (PVIS…RPFK), 777-869 (PKPF…LVVT), 873-958 (PKPT…YLSM), 965-1060 (TDTF…ELLV), 1065-1150 (PKPS…NHSD), and 1161-1242 (PKPS…EPSD). N-linked (GlcNAc...) asparagine glycans are attached at residues Asn607, Asn747, Asn798, Asn846, Asn939, Asn986, Asn1027, and Asn1082. A disulfide bridge connects residues Cys703 and Cys750. Intrachain disulfides connect Cys799/Cys849 and Cys895/Cys942. Cys1087 and Cys1134 are oxidised to a cystine. Residues Asn1147 and Asn1223 are each glycosylated (N-linked (GlcNAc...) asparagine). The cysteines at positions 1183 and 1226 are disulfide-linked. The segment at 1308-1336 (CNQEGEPGTPANSPSSTSQRISVELPVPI) is disordered. The segment covering 1317-1328 (PANSPSSTSQRI) has biased composition (polar residues).

In terms of assembly, interacts with INHA. In PubMed:12385827 does not interact with INHA; standard receptor binding assay. Interacts with ACVR1B; the interaction appears to be ligand-dependent as it is diminished by inhibin B and activin A. Interacts with ACVR2A, ACVR2B, ACVRL1 and BMPR1B. Interacts with HECTD1. In terms of tissue distribution, highly expressed in pancreas, testis and fetal liver. Moderately expressed in heart, prostate and small intestine. Expressed at very low levels in brain, thymus, ovary, colon, fetal lung and fetal kidney. Expressed in muscle. Isoform 3 is expressed in pituitary gland.

The protein resides in the membrane. The protein localises to the secreted. In terms of biological role, seems to be a coreceptor in inhibin signaling, but seems not to be a high-affinity inhibin receptor. Antagonizes activin A signaling in the presence or absence of inhibin B. Necessary to mediate a specific antagonistic effect of inhibin B on activin-stimulated transcription. The polypeptide is Immunoglobulin superfamily member 1 (IGSF1) (Homo sapiens (Human)).